Here is an 82-residue protein sequence, read N- to C-terminus: NADH-ubiquinone oxidoreductase 9.5 kDa subunit (82 aa).

The chain crosses the membrane as a helical span at residues 25–43; it reads AYFYSCVIAGLGPVFLTVV.

It belongs to the complex I NDUFA3 subunit family. Complex I is composed of about 40 different subunits.

The protein resides in the mitochondrion inner membrane. Its function is as follows. Accessory subunit of the mitochondrial membrane respiratory chain NADH dehydrogenase (Complex I), that is believed not to be involved in catalysis. Complex I functions in the transfer of electrons from NADH to the respiratory chain. The immediate electron acceptor for the enzyme is believed to be ubiquinone. This subunit binds ubiquinone. The polypeptide is NADH-ubiquinone oxidoreductase 9.5 kDa subunit (nuo9.5) (Neurospora crassa (strain ATCC 24698 / 74-OR23-1A / CBS 708.71 / DSM 1257 / FGSC 987)).